Consider the following 420-residue polypeptide: Maturation protein A2 (420 aa).

RNA-binding regions lie at residues 158–176 (IKYL…RAVK), 226–236 (QNRHDKIQRLL), and 294–298 (PVSDW).

Belongs to the Leviviricetes maturation protein family. Interacts with host MurA; this interaction inhibits the first step in host cell wall synthesis. Interacts with the capsid protein.

It localises to the virion. In terms of biological role, induces host cell lysis. Inhibits host MurA activity thereby blocking the synthesis of murein precursors necessary for the host cell wall biosynthesis. May be responsible for the attachment to the host pilus. Makes extensive contacts with the viral genome. In Escherichia virus Qbeta (Bacteriophage Q-beta), this protein is Maturation protein A2.